Consider the following 361-residue polypeptide: tRNA N6-adenosine threonylcarbamoyltransferase (361 aa).

The Fe cation site is built by histidine 110 and histidine 114. Residues 132–136, aspartate 165, glycine 178, aspartate 182, and asparagine 289 contribute to the substrate site; that span reads LVSGG. A Fe cation-binding site is contributed by aspartate 317.

This sequence belongs to the KAE1 / TsaD family. Fe(2+) is required as a cofactor.

It is found in the cytoplasm. The enzyme catalyses L-threonylcarbamoyladenylate + adenosine(37) in tRNA = N(6)-L-threonylcarbamoyladenosine(37) in tRNA + AMP + H(+). Its function is as follows. Required for the formation of a threonylcarbamoyl group on adenosine at position 37 (t(6)A37) in tRNAs that read codons beginning with adenine. Is involved in the transfer of the threonylcarbamoyl moiety of threonylcarbamoyl-AMP (TC-AMP) to the N6 group of A37, together with TsaE and TsaB. TsaD likely plays a direct catalytic role in this reaction. The polypeptide is tRNA N6-adenosine threonylcarbamoyltransferase (Nitratidesulfovibrio vulgaris (strain ATCC 29579 / DSM 644 / CCUG 34227 / NCIMB 8303 / VKM B-1760 / Hildenborough) (Desulfovibrio vulgaris)).